We begin with the raw amino-acid sequence, 367 residues long: Alanine racemase (367 aa).

K40 serves as the catalytic Proton acceptor; specific for D-alanine. Position 40 is an N6-(pyridoxal phosphate)lysine (K40). Residue R136 participates in substrate binding. The active-site Proton acceptor; specific for L-alanine is Y263. Substrate is bound at residue M310.

This sequence belongs to the alanine racemase family. Requires pyridoxal 5'-phosphate as cofactor.

The catalysed reaction is L-alanine = D-alanine. The protein operates within amino-acid biosynthesis; D-alanine biosynthesis; D-alanine from L-alanine: step 1/1. Its function is as follows. Catalyzes the interconversion of L-alanine and D-alanine. May also act on other amino acids. The polypeptide is Alanine racemase (alr) (Streptococcus pneumoniae serotype 19F (strain G54)).